Reading from the N-terminus, the 111-residue chain is Phosphoribosyl-ATP pyrophosphatase (111 aa).

Belongs to the PRA-PH family.

The protein localises to the cytoplasm. It catalyses the reaction 1-(5-phospho-beta-D-ribosyl)-ATP + H2O = 1-(5-phospho-beta-D-ribosyl)-5'-AMP + diphosphate + H(+). Its pathway is amino-acid biosynthesis; L-histidine biosynthesis; L-histidine from 5-phospho-alpha-D-ribose 1-diphosphate: step 2/9. The chain is Phosphoribosyl-ATP pyrophosphatase from Pseudomonas paraeruginosa (strain DSM 24068 / PA7) (Pseudomonas aeruginosa (strain PA7)).